Here is an 826-residue protein sequence, read N- to C-terminus: MVTGDKESSLMKKRNKRSHKRKREEDFERIDSLPWSSSIPIGEDDEGESFSTLFSGSGQLDGGFLSLEEIDEADYHLTLPTIESEITERKQSPEDDDDTNETVDEMIEGEEAEEDGEGRDDEDDEDDEETRKKKEKKAKRNKEKKKEKKKKKQKKINEAAKNQDASAVSCDGDDTVEEQVEEEEIPPEFSAWSSMRLHPLLMKSIYRLDFKEPTKIQKACFNVAAYQGKDVIGAAETGSGKTLAFGLPILQRLLDEREKVGKLYALKGEEAQKYAADGYLRALIITPTRELALQVTEHLENAAKNLSVKVVPIVGGMFSEKQERRLKEKPEIVVATPGRLWELMSAGEKHLVELHSLSFFVLDEADRMVERGHFRELQSILDLLPVTDKPNEGKTQTVKSNDTVLNVPKKKRQTFVFSATIALSSDFRKKLKRGSSKSKQSSSGEVNSIEVLSERAGMRDNVAIIDLTTTSILAPKIEESFIKCEEKEKDAYLYYILSVHGQGRTIVFCTSVTDLRHISGLLKILGLDVCTLFSEMKQRARLKSIDRFRASENGILIATDLVARGIDIKNVRTIIHYKLPHSAEVYVHRCGRTARAFADGCSIALIEPNETSKFYTLCKSFSMESVKIFPLDNSYMPAVRKRLYLARQIYEIERKGSRENADRTWLKKHAESMELELDDEESEEERVDNVRQRKATSARLNKLKEELSTLLSHPMQPKKFSGRYFAGVGVSTLMQNQFVELKKQKQAQMQIGGDIKRRKLVVINQNCIEPLQALRAGGNEMLKMKGQSAEKRRDIASLKKKRKEEKIGRRDQRRNQKKQRKLMASS.

The segment covering 1–10 has biased composition (basic and acidic residues); it reads MVTGDKESSL. Disordered stretches follow at residues 1 to 62 and 76 to 175; these read MVTG…QLDG and HLTL…GDDT. Positions 11–22 are enriched in basic residues; it reads MKKRNKRSHKRK. Positions 49-58 are enriched in polar residues; that stretch reads SFSTLFSGSG. A compositionally biased stretch (acidic residues) spans 94–128; the sequence is EDDDDTNETVDEMIEGEEAEEDGEGRDDEDDEDDE. Residues 125–166 adopt a coiled-coil conformation; that stretch reads EDDEETRKKKEKKAKRNKEKKKEKKKKKQKKINEAAKNQDAS. Residues 133–154 are compositionally biased toward basic residues; the sequence is KKEKKAKRNKEKKKEKKKKKQK. The Q motif motif lies at 190–218; it reads SAWSSMRLHPLLMKSIYRLDFKEPTKIQK. A Helicase ATP-binding domain is found at 222–439; the sequence is NVAAYQGKDV…KLKRGSSKSK (218 aa). 235-242 lines the ATP pocket; sequence AETGSGKT. Positions 363–366 match the DEAD box motif; that stretch reads DEAD. Residues 476–644 form the Helicase C-terminal domain; sequence KIEESFIKCE…YMPAVRKRLY (169 aa). 2 coiled-coil regions span residues 666–712 and 783–810; these read LKKH…TLLS and KMKG…IGRR. Residues 783 to 826 form a disordered region; sequence KMKGQSAEKRRDIASLKKKRKEEKIGRRDQRRNQKKQRKLMASS. Basic and acidic residues-rich tracts occupy residues 788-797 and 804-814; these read SAEKRRDIAS and EEKIGRRDQRR. Residues 815 to 826 show a composition bias toward basic residues; it reads NQKKQRKLMASS.

This sequence belongs to the DEAD box helicase family. DDX24/MAK5 subfamily.

It carries out the reaction ATP + H2O = ADP + phosphate + H(+). The polypeptide is DEAD-box ATP-dependent RNA helicase 13 (RH13) (Arabidopsis thaliana (Mouse-ear cress)).